We begin with the raw amino-acid sequence, 141 residues long: Ribosome-binding factor A (141 aa).

The protein belongs to the RbfA family. Monomer. Binds 30S ribosomal subunits, but not 50S ribosomal subunits or 70S ribosomes.

The protein localises to the cytoplasm. In terms of biological role, one of several proteins that assist in the late maturation steps of the functional core of the 30S ribosomal subunit. Associates with free 30S ribosomal subunits (but not with 30S subunits that are part of 70S ribosomes or polysomes). Required for efficient processing of 16S rRNA. May interact with the 5'-terminal helix region of 16S rRNA. The chain is Ribosome-binding factor A from Beijerinckia indica subsp. indica (strain ATCC 9039 / DSM 1715 / NCIMB 8712).